We begin with the raw amino-acid sequence, 139 residues long: FIVLSQEGSLCSISIEKALPEDRGLYKCVAKNSAGQAECSCQVTVDDAPTGENAKAPEMKARRPKSSLPPVLGTESDATVKKKPAPKTPPKAAMPPQIIQFPEDQKVRAGESVELFGKVAGTQPITCTWMKFRKQIQES.

The tract at residues 48-97 (APTGENAKAPEMKARRPKSSLPPVLGTESDATVKKKPAPKTPPKAAMPPQ) is disordered.

It belongs to the protein kinase superfamily. CAMK Ser/Thr protein kinase family. In terms of assembly, interacts with SVIL. The C-terminus is deglutamylated by AGTPBP1/CCP1, AGBL1/CCP4 and AGBL4/CCP6, leading to the formation of Myosin light chain kinase, smooth muscle, deglutamylated form. The consequences of C-terminal deglutamylation are unknown.

It carries out the reaction L-seryl-[myosin light chain] + ATP = O-phospho-L-seryl-[myosin light chain] + ADP + H(+). The catalysed reaction is L-threonyl-[myosin light chain] + ATP = O-phospho-L-threonyl-[myosin light chain] + ADP + H(+). In terms of biological role, phosphorylates a specific serine in the N-terminus of a myosin light chain. Also regulates actin-myosin interaction through a non-kinase activity. In Sus scrofa (Pig), this protein is Myosin light chain kinase, smooth muscle (MYLK).